The primary structure comprises 490 residues: MADALRFVAWSCCLQLLFLLLGVQGYEVPKAKIDVFYPKGFEVSIPDEEGITLFAFHGKLNEEMEGLEAGTWARDIVKAKNGRWTFRDRITALKPGDTLYYWTYVIYNGLGYREDDGSFVVNGYSGNNASPHPPVVPVSTTPWTPPADPDIDIRLGCTTPKTEVNGAPTRCAGQLVFVDEFNAAKLDPNKWKAERRFSGQPDYEFNVYVDDAPETLCLANGHVVLSTNTMKKQFKKGSGESLDLGEKCTGQANTHDCVRNGRTLNDGLPPMVTAQFSSKDFSFKYGRVEVRAKMPRAQWVTPQIWLQPRRPIYGVDDYRSGQLRIAYTRPNGGNLDLYGAAVLFADEPLRSVKNCLKPGTGNNSEDWSDSFHNYTLEWTPRELRWLVDGKEWCVQGSAKGSFSETTAAGKSLPQAQKLEEGTGLAPFDQEFYLTFGLSVGGFNEYQHEIKPWNERAPQAQKAFWKEVKKIRDHWLDEGHMKIDYVKVYSL.

A signal peptide spans 1–25 (MADALRFVAWSCCLQLLFLLLGVQG). The CBM39 domain maps to 26–126 (YEVPKAKIDV…GSFVVNGYSG (101 aa)). The region spanning 162–490 (TEVNGAPTRC…KIDYVKVYSL (329 aa)) is the GH16 domain. 2 N-linked (GlcNAc...) asparagine glycosylation sites follow: N362 and N373.

It belongs to the insect beta-1,3-glucan binding protein family.

The protein resides in the secreted. Its function is as follows. Involved in the recognition of invading microorganisms. Binds specifically to beta-1,3-glucan and activates the phenoloxidase cascade. This is Gram-negative bacteria-binding protein 3 from Drosophila melanogaster (Fruit fly).